Reading from the N-terminus, the 677-residue chain is Methionine--tRNA ligase (677 aa).

Residues 15–25 (PYANGPIHIGH) carry the 'HIGH' region motif. Residues C146, C149, C159, and C162 each contribute to the Zn(2+) site. The short motif at 332–336 (KMSKS) is the 'KMSKS' region element. Position 335 (K335) interacts with ATP. In terms of domain architecture, tRNA-binding spans 576-677 (DFAKVDLRVA…DGAKPGMRIM (102 aa)).

This sequence belongs to the class-I aminoacyl-tRNA synthetase family. MetG type 1 subfamily. Homodimer. Zn(2+) serves as cofactor.

It is found in the cytoplasm. The enzyme catalyses tRNA(Met) + L-methionine + ATP = L-methionyl-tRNA(Met) + AMP + diphosphate. Its function is as follows. Is required not only for elongation of protein synthesis but also for the initiation of all mRNA translation through initiator tRNA(fMet) aminoacylation. In Idiomarina loihiensis (strain ATCC BAA-735 / DSM 15497 / L2-TR), this protein is Methionine--tRNA ligase.